A 274-amino-acid polypeptide reads, in one-letter code: MGKGRAPCCDKTKVKRGPWSHDEDLKLISFIHKNGHENWRSLPKQAGLLRCGKSCRLRWINYLRPDVKRGNFSAEEEDTIIKLHQSFGNKWSKIASKLPGRTDNEIKNVWHTHLKKRLSSETNLNADEAGSKGSLNEEENSQESSPNASMSFAGSNISSKDDDAQISQMFEHILTYSEFTGMLQEVDKPELLEMPFDLDPDIWSFIDGSDSFQQPENRALQESEEDEVDKWFKHLESELGLEENDNQQQQQQHKQGTEDEHSSSLLESYELLIH.

HTH myb-type domains are found at residues 11-63 (KTKV…INYL) and 64-118 (RPDV…KKRL). 2 DNA-binding regions (H-T-H motif) span residues 39–63 (WRSL…INYL) and 91–114 (WSKI…HTHL). Disordered stretches follow at residues 121–160 (ETNL…ISSK) and 237–274 (SELG…LLIH). The span at 263–274 (SSLLESYELLIH) shows a compositional bias: low complexity.

Expressed in leaves. Specifically expressed in fibers and vessels undergoing secondary wall thickening, especially in inflorescence stems.

Its subcellular location is the nucleus. In terms of biological role, transcriptional activator that binds DNA to the AC cis-elements 5'-ACCTACC-3', 5'-ACCAACC-3' and 5'-ACCTAAC-3' of promoters and specifically activates lignin biosynthetic genes during secondary wall formation mediated by SND1. In Arabidopsis thaliana (Mouse-ear cress), this protein is Transcription factor MYB58.